The sequence spans 437 residues: Aspartokinase (437 aa).

It belongs to the aspartokinase family.

The catalysed reaction is L-aspartate + ATP = 4-phospho-L-aspartate + ADP. Its pathway is amino-acid biosynthesis; L-lysine biosynthesis via DAP pathway; (S)-tetrahydrodipicolinate from L-aspartate: step 1/4. It functions in the pathway amino-acid biosynthesis; L-methionine biosynthesis via de novo pathway; L-homoserine from L-aspartate: step 1/3. It participates in amino-acid biosynthesis; L-threonine biosynthesis; L-threonine from L-aspartate: step 1/5. The protein is Aspartokinase (lysC) of Chlamydia muridarum (strain MoPn / Nigg).